Reading from the N-terminus, the 775-residue chain is Kinesin-like protein KIF3B (775 aa).

One can recognise a Kinesin motor domain in the interval Ser-9 to Ile-341. Gly-97–Thr-104 lines the ATP pocket. Residues Lys-372–Ile-419 form a disordered region. Residues Ser-374–Arg-385 show a composition bias toward basic residues. Residues Gly-389–Val-413 show a composition bias toward acidic residues. A coiled-coil region spans residues Leu-501–Leu-591. Positions Phe-716–Lys-775 are disordered. Residues Ala-718–Ser-734 show a composition bias toward low complexity. Residues Lys-735–Lys-746 are compositionally biased toward basic residues. Residues Ser-756–Leu-765 show a composition bias toward low complexity.

The protein belongs to the TRAFAC class myosin-kinesin ATPase superfamily. Kinesin family. Heterodimer of KIF3A and KIF3B. KIF3A/KIF3B heterodimer interacts with KIFAP3 forming a heterotrimeric (KIF3A/KIF3B/KIFAP3) complex.

Its subcellular location is the cytoplasm. The protein resides in the cytoskeleton. The protein localises to the cell projection. It is found in the cilium. It localises to the dendritic spine. Its function is as follows. Microtubule-based molecular motor that transport intracellular cargos, such as vesicles, organelles and protein complexes. Uses ATP hydrolysis to generate force to bind and move along the microtubule. Plays a role in cilia formation. Required for photoreceptor development. The polypeptide is Kinesin-like protein KIF3B (Danio rerio (Zebrafish)).